A 239-amino-acid polypeptide reads, in one-letter code: Small ribosomal subunit protein uS3c (239 aa).

A KH type-2 domain is found at 43 to 139 (IKNYIQKNRK…RLNIGIEKVK (97 aa)).

Belongs to the universal ribosomal protein uS3 family. In terms of assembly, part of the 30S ribosomal subunit.

Its subcellular location is the plastid. It localises to the chloroplast. The protein is Small ribosomal subunit protein uS3c (rps3) of Oryza nivara (Indian wild rice).